The following is a 423-amino-acid chain: Enolase (423 aa).

(2R)-2-phosphoglycerate is bound at residue Gln-163. Glu-205 serves as the catalytic Proton donor. Mg(2+) contacts are provided by Asp-242, Glu-285, and Asp-312. Residues Lys-337, Arg-366, Ser-367, and Lys-388 each coordinate (2R)-2-phosphoglycerate. Lys-337 functions as the Proton acceptor in the catalytic mechanism.

This sequence belongs to the enolase family. It depends on Mg(2+) as a cofactor.

Its subcellular location is the cytoplasm. The protein resides in the secreted. The protein localises to the cell surface. The catalysed reaction is (2R)-2-phosphoglycerate = phosphoenolpyruvate + H2O. Its pathway is carbohydrate degradation; glycolysis; pyruvate from D-glyceraldehyde 3-phosphate: step 4/5. Catalyzes the reversible conversion of 2-phosphoglycerate (2-PG) into phosphoenolpyruvate (PEP). It is essential for the degradation of carbohydrates via glycolysis. The sequence is that of Enolase from Desulforapulum autotrophicum (strain ATCC 43914 / DSM 3382 / VKM B-1955 / HRM2) (Desulfobacterium autotrophicum).